The chain runs to 892 residues: Alanine--tRNA ligase (892 aa).

Zn(2+) contacts are provided by histidine 596, histidine 600, cysteine 700, and histidine 704.

It belongs to the class-II aminoacyl-tRNA synthetase family. Requires Zn(2+) as cofactor.

It is found in the cytoplasm. It catalyses the reaction tRNA(Ala) + L-alanine + ATP = L-alanyl-tRNA(Ala) + AMP + diphosphate. In terms of biological role, catalyzes the attachment of alanine to tRNA(Ala) in a two-step reaction: alanine is first activated by ATP to form Ala-AMP and then transferred to the acceptor end of tRNA(Ala). Also edits incorrectly charged Ser-tRNA(Ala) and Gly-tRNA(Ala) via its editing domain. In Methanococcus vannielii (strain ATCC 35089 / DSM 1224 / JCM 13029 / OCM 148 / SB), this protein is Alanine--tRNA ligase.